Reading from the N-terminus, the 98-residue chain is Small ribosomal subunit protein bS20 (98 aa).

Residues 1–15 (MAPKKTTKKGGPKKR) are compositionally biased toward basic residues. Residues 1–21 (MAPKKTTKKGGPKKRPSAEKR) form a disordered region.

It belongs to the bacterial ribosomal protein bS20 family.

Binds directly to 16S ribosomal RNA. In Chlamydia abortus (strain DSM 27085 / S26/3) (Chlamydophila abortus), this protein is Small ribosomal subunit protein bS20.